The following is a 190-amino-acid chain: Lipid A acyltransferase PagP (190 aa).

Positions 1–18 (MKRLISCLTIICALNASA) are cleaved as a signal peptide. Catalysis depends on residues His60, Asp103, and Ser104.

This sequence belongs to the lipid A palmitoyltransferase family. In terms of assembly, homodimer.

It is found in the cell outer membrane. The enzyme catalyses a lipid A + a 1,2-diacyl-sn-glycero-3-phosphocholine = a hepta-acyl lipid A + a 2-acyl-sn-glycero-3-phosphocholine. It catalyses the reaction a lipid IVA + a 1,2-diacyl-sn-glycero-3-phosphocholine = a lipid IVB + a 2-acyl-sn-glycero-3-phosphocholine. The catalysed reaction is a lipid IIA + a 1,2-diacyl-sn-glycero-3-phosphocholine = a lipid IIB + a 2-acyl-sn-glycero-3-phosphocholine. Transfers a fatty acid residue from the sn-1 position of a phospholipid to the N-linked hydroxyfatty acid chain on the proximal unit of lipid A or its precursors. The chain is Lipid A acyltransferase PagP from Legionella pneumophila (strain Corby).